Here is a 262-residue protein sequence, read N- to C-terminus: Apolipoprotein A-I-1 (262 aa).

A signal peptide spans 1–18 (MKFLALALTILLAAGTQA). The tract at residues 32–63 (VKAALSMYIAQVKLTAQRSIDLLDDTEYKEYK) is 3 X approximate tandem repeats. 2 tandem repeats follow at residues 64-85 (MQLT…QSLA) and 87-107 (YSEA…AEVM). A 10 X approximate tandem repeats region spans residues 64-262 (MQLTQSLDNL…YETISQAMKA (199 aa)). Residues 108 to 118 (KDVEELRSQLE) form a 3; half-length repeat. A run of 5 repeats spans residues 119 to 140 (PKRA…KKLE), 141 to 162 (PLIK…AKME), 163 to 184 (PIVE…TKLM), 185 to 206 (PIVE…TLAA), and 207 to 228 (PYAE…EKVS). One copy of the 9; half-length repeat lies at 229 to 239 (PLSEDFKGQVG). Copy 10 of the repeat occupies 240-262 (PAAEQAKQKLLAFYETISQAMKA).

This sequence belongs to the apolipoprotein A1/A4/E family.

It localises to the secreted. In terms of biological role, participates in the reverse transport of cholesterol from tissues to the liver for excretion by promoting cholesterol efflux from tissues and by acting as a cofactor for the lecithin cholesterol acyltransferase (LCAT). In Oncorhynchus mykiss (Rainbow trout), this protein is Apolipoprotein A-I-1.